We begin with the raw amino-acid sequence, 699 residues long: Receptor-type tyrosine-protein phosphatase epsilon (699 aa).

The signal sequence occupies residues 1 to 22; that stretch reads MEPFCPLLLASFSLSLATAGQG. Positions 20-36 are enriched in low complexity; sequence GQGNDTTPTESNWTSTT. The interval 20 to 41 is disordered; that stretch reads GQGNDTTPTESNWTSTTAGPPD. N-linked (GlcNAc...) asparagine glycans are attached at residues N23 and N31. The Extracellular segment spans residues 23-47; sequence NDTTPTESNWTSTTAGPPDPGTSQP. Residues 48 to 68 form a helical membrane-spanning segment; the sequence is LLTWLLLPLLLLLFLLAAYFF. Over 69–699 the chain is Cytoplasmic; that stretch reads RFRKQRKAVV…DIFSDYANFK (631 aa). Tyrosine-protein phosphatase domains lie at 134-393 and 425-688; these read FREE…LLEY and LEEE…VQDF. Residues D302, 334–340, and Q378 contribute to the substrate site; that span reads CSAGVGR. C334 functions as the Phosphocysteine intermediate in the catalytic mechanism. C629 acts as the Phosphocysteine intermediate in catalysis. Y695 is subject to Phosphotyrosine.

The protein belongs to the protein-tyrosine phosphatase family. Receptor class 4 subfamily. As to quaternary structure, monomer. Isoform 2: Homodimer. Can form oligomers. Dimerization is increased by oxidative stress and decreased by EGFR. Isoform 2 interacts with GRB2. In terms of processing, a catalytically active cytoplasmic form (p65) is produced by proteolytic cleavage of either isoform 1, isoform 2 or isoform 3. Isoform 1 and isoform 2 are phosphorylated on tyrosine residues by tyrosine kinase Neu. Post-translationally, N-glycosylated. As to expression, isoform 1 is highly expressed in the brain, lung, spleen and testis. Isoform 2 is highly expressed in thymus, spleen and lung. Isoform 1 and isoform 2 are expressed in primary hepatocytes.

The protein resides in the cell membrane. It is found in the cytoplasm. It carries out the reaction O-phospho-L-tyrosyl-[protein] + H2O = L-tyrosyl-[protein] + phosphate. In terms of biological role, isoform 1 plays a critical role in signaling transduction pathways and phosphoprotein network topology in red blood cells. May play a role in osteoclast formation and function. Acts as a negative regulator of insulin receptor (IR) signaling and is involved in insulin-induced glucose metabolism mainly through direct dephosphorylation and inactivation of IR in hepatocytes and liver. Functionally, isoform 2 acts as a negative regulator of insulin receptor (IR) signaling in skeletal muscle. Regulates insulin-induced tyrosine phosphorylation of insulin receptor (IR) and insulin receptor substrate 1 (IRS-1), phosphorylation of protein kinase B and glycogen synthase kinase-3 and insulin induced stimulation of glucose uptake. Isoform 1 and isoform 2 act as a negative regulator of FceRI-mediated signal transduction leading to cytokine production and degranulation, most likely by acting at the level of SYK to affect downstream events such as phosphorylation of SLP76 and LAT and mobilization of Ca(2+). The chain is Receptor-type tyrosine-protein phosphatase epsilon (Ptpre) from Rattus norvegicus (Rat).